A 479-amino-acid chain; its full sequence is Phosphatidylinositol 4-kinase type 2-alpha (479 aa).

Position 1 is an N-acetylmethionine (Met-1). The disordered stretch occupies residues 1-58 (MDETSPLVSPERAQPPEYTFPSGSGAHFPQVPGGAVRVAAAAGSGPSPPCSPGHDRER). Residues Ser-5, Ser-9, Ser-44, Ser-47, and Ser-51 each carry the phosphoserine modification. The segment covering 31–45 (VPGGAVRVAAAAGSG) has biased composition (low complexity). The region spanning 124 to 453 (SIYPERIYQG…VQMPPVIVET (330 aa)) is the PI3K/PI4K catalytic domain. Positions 130 to 136 (IYQGSSG) are G-loop. Residues 131-137 (YQGSSGS) and Lys-152 each bind ATP. The tract at residues 157-159 (EPY) is important for substrate binding. The important for interaction with membranes stretch occupies residues 165–178 (KWTKWLQKLCCPCC). 4 S-palmitoyl cysteine lipidation sites follow: Cys-174, Cys-175, Cys-177, and Cys-178. 261–264 (QLFV) provides a ligand contact to ATP. The segment at 268–276 (KDADYWLRR) is important for interaction with membranes. The segment at 305–313 (RNTDRGNDN) is catalytic loop. Residues 344–364 (AIDNGLAFPLKHPDSWRAYPF) form an activation loop region. Asp-346 is a binding site for ATP. An important for interaction with membranes region spans residues 359 to 368 (WRAYPFYWAW). At Ser-462 the chain carries Phosphoserine.

Belongs to the PI3/PI4-kinase family. Type II PI4K subfamily. As to quaternary structure, associates with the BLOC-1 and the AP-3 complexes; the BLOC-1 complex is required for optimal binding of PI4K2A to the AP-3 complex. Interacts with BLOC1S5 and DTNBP1. Interacts with ITCH. Interacts with FOS; this interaction may enhance phosphatidylinositol phosphorylation activity. Interacts with ATG9A. Palmitoylated by ZDHHC3 and ZDHHC7 in the CCPCC motif. Palmitoylation is cholesterol-dependent, and required for TGN localization. In terms of processing, ubiquitinated by ITCH; this does not lead to proteasomal degradation. Detected in brain (at protein level).

Its subcellular location is the golgi apparatus. The protein localises to the trans-Golgi network membrane. It localises to the membrane raft. It is found in the endosome. The protein resides in the endosome membrane. Its subcellular location is the cytoplasmic vesicle. The protein localises to the cell projection. It localises to the dendrite. It is found in the presynaptic cell membrane. The protein resides in the synapse. Its subcellular location is the synaptosome. The protein localises to the mitochondrion. It localises to the membrane. It is found in the cell membrane. The protein resides in the perikaryon. Its subcellular location is the neuron projection. The enzyme catalyses a 1,2-diacyl-sn-glycero-3-phospho-(1D-myo-inositol) + ATP = a 1,2-diacyl-sn-glycero-3-phospho-(1D-myo-inositol 4-phosphate) + ADP + H(+). Its function is as follows. Membrane-bound phosphatidylinositol-4 kinase (PI4-kinase) that catalyzes the phosphorylation of phosphatidylinositol (PI) to phosphatidylinositol 4-phosphate (PI4P), a lipid that plays important roles in endocytosis, Golgi function, protein sorting and membrane trafficking and is required for prolonged survival of neurons. Besides, phosphorylation of phosphatidylinositol (PI) to phosphatidylinositol 4-phosphate (PI4P) is the first committed step in the generation of phosphatidylinositol 4,5-bisphosphate (PIP2), a precursor of the second messenger inositol 1,4,5-trisphosphate (InsP3). This is Phosphatidylinositol 4-kinase type 2-alpha (Pi4k2a) from Mus musculus (Mouse).